Reading from the N-terminus, the 171-residue chain is S-ribosylhomocysteine lyase (171 aa).

Residues H54, H58, and C128 each contribute to the Fe cation site.

It belongs to the LuxS family. In terms of assembly, homodimer. Fe cation serves as cofactor.

It catalyses the reaction S-(5-deoxy-D-ribos-5-yl)-L-homocysteine = (S)-4,5-dihydroxypentane-2,3-dione + L-homocysteine. In terms of biological role, involved in the synthesis of autoinducer 2 (AI-2) which is secreted by bacteria and is used to communicate both the cell density and the metabolic potential of the environment. The regulation of gene expression in response to changes in cell density is called quorum sensing. Catalyzes the transformation of S-ribosylhomocysteine (RHC) to homocysteine (HC) and 4,5-dihydroxy-2,3-pentadione (DPD). The polypeptide is S-ribosylhomocysteine lyase (Photorhabdus laumondii subsp. laumondii (strain DSM 15139 / CIP 105565 / TT01) (Photorhabdus luminescens subsp. laumondii)).